The chain runs to 272 residues: NH(3)-dependent NAD(+) synthetase (272 aa).

45 to 52 (GISGGQDS) contacts ATP. Asp-51 is a Mg(2+) binding site. Arg-138 is a deamido-NAD(+) binding site. Residue Thr-158 participates in ATP binding. Glu-163 is a binding site for Mg(2+). Lys-171 and Asp-178 together coordinate deamido-NAD(+). Residues Lys-187 and Thr-209 each contribute to the ATP site. Residue 258 to 259 (HK) participates in deamido-NAD(+) binding.

The protein belongs to the NAD synthetase family. Homodimer.

The enzyme catalyses deamido-NAD(+) + NH4(+) + ATP = AMP + diphosphate + NAD(+) + H(+). It participates in cofactor biosynthesis; NAD(+) biosynthesis; NAD(+) from deamido-NAD(+) (ammonia route): step 1/1. In terms of biological role, catalyzes the ATP-dependent amidation of deamido-NAD to form NAD. Uses ammonia as a nitrogen source. The chain is NH(3)-dependent NAD(+) synthetase from Bacillus cereus (strain ATCC 10987 / NRS 248).